The following is a 297-amino-acid chain: Mitochondrial nicotinamide adenine dinucleotide transporter SLC25A51 (297 aa).

The segment covering 1 to 11 (MMDSEAHEKRP) has biased composition (basic and acidic residues). The disordered stretch occupies residues 1-20 (MMDSEAHEKRPPILTSSKQD). 3 Solcar repeats span residues 28–108 (VGEM…LSCL), 116–200 (PEFA…IKEH), and 213–296 (NDFI…LLKV). The next 6 helical transmembrane spans lie at 36–56 (CGCC…KVLF), 85–105 (LPPL…YEDL), 116–135 (PEFA…EAIF), 179–199 (ILFR…PIKE), 215–235 (FICG…INVV), and 268–289 (LFRG…INAT).

The protein belongs to the mitochondrial carrier (TC 2.A.29) family.

The protein resides in the mitochondrion inner membrane. It catalyses the reaction NAD(+)(in) = NAD(+)(out). In terms of biological role, mitochondrial membrane carrier protein that mediates the import of NAD(+) into mitochondria. Mitochondrial NAD(+) is required for glycolysis and mitochondrial respiration. Compared to SLC25A52, SLC25A51-mediated transport is essential for the import of NAD(+) in mitochondria. The transport mechanism, uniport or antiport, its electrogenicity and substrate selectivity, remain to be elucidated. This Homo sapiens (Human) protein is Mitochondrial nicotinamide adenine dinucleotide transporter SLC25A51.